A 126-amino-acid polypeptide reads, in one-letter code: Translation initiation factor 5A (126 aa).

The residue at position 36 (Lys36) is a Hypusine.

The protein belongs to the eIF-5A family.

Its subcellular location is the cytoplasm. Its function is as follows. Functions by promoting the formation of the first peptide bond. The protein is Translation initiation factor 5A of Haloarcula marismortui (strain ATCC 43049 / DSM 3752 / JCM 8966 / VKM B-1809) (Halobacterium marismortui).